A 197-amino-acid chain; its full sequence is uncharacterized protein (197 aa).

A run of 4 helical transmembrane segments spans residues 9–29 (IYIL…RFIL), 67–87 (LASL…ILML), 104–124 (IIAV…ISVI), and 160–180 (GLDL…MLVI).

This sequence belongs to the YggT family.

The protein resides in the cell membrane. This is an uncharacterized protein from Pseudomonas aeruginosa (strain ATCC 15692 / DSM 22644 / CIP 104116 / JCM 14847 / LMG 12228 / 1C / PRS 101 / PAO1).